Consider the following 189-residue polypeptide: Ribonuclease HII (189 aa).

Residues 1–189 (MIAGVDEAGR…IAALLKNNKK (189 aa)) enclose the RNase H type-2 domain. Residues Asp6, Glu7, and Asp98 each contribute to the a divalent metal cation site.

This sequence belongs to the RNase HII family. Mn(2+) serves as cofactor. Mg(2+) is required as a cofactor.

It localises to the cytoplasm. It carries out the reaction Endonucleolytic cleavage to 5'-phosphomonoester.. Endonuclease that specifically degrades the RNA of RNA-DNA hybrids. The polypeptide is Ribonuclease HII (Dichelobacter nodosus (strain VCS1703A)).